A 116-amino-acid chain; its full sequence is Chaperone protein SicP (116 aa).

The protein belongs to the SicP family.

The protein localises to the cytoplasm. Its function is as follows. Molecular chaperone required for SptP stabilization and secretion. The protein is Chaperone protein SicP (sicP) of Salmonella paratyphi A (strain ATCC 9150 / SARB42).